The sequence spans 159 residues: Globin D, coelomic (159 aa).

Gly-2 is subject to N-acetylglycine. In terms of domain architecture, Globin spans 12-158 (DLTPAEKDLI…VQGVLITKHA (147 aa)). Residues His-74 and His-105 each contribute to the heme b site.

This sequence belongs to the globin family. In terms of assembly, homodimer.

The sequence is that of Globin D, coelomic from Molpadia arenicola (Sea cucumber).